The primary structure comprises 378 residues: Ribosomal RNA large subunit methyltransferase G (378 aa).

Belongs to the methyltransferase superfamily. RlmG family.

Its subcellular location is the cytoplasm. The enzyme catalyses guanosine(1835) in 23S rRNA + S-adenosyl-L-methionine = N(2)-methylguanosine(1835) in 23S rRNA + S-adenosyl-L-homocysteine + H(+). Specifically methylates the guanine in position 1835 (m2G1835) of 23S rRNA. This Enterobacter sp. (strain 638) protein is Ribosomal RNA large subunit methyltransferase G.